Reading from the N-terminus, the 141-residue chain is Large ribosomal subunit protein uL11 (141 aa).

This sequence belongs to the universal ribosomal protein uL11 family. Part of the ribosomal stalk of the 50S ribosomal subunit. Interacts with L10 and the large rRNA to form the base of the stalk. L10 forms an elongated spine to which L12 dimers bind in a sequential fashion forming a multimeric L10(L12)X complex. In terms of processing, one or more lysine residues are methylated.

Functionally, forms part of the ribosomal stalk which helps the ribosome interact with GTP-bound translation factors. This chain is Large ribosomal subunit protein uL11, found in Chlamydia trachomatis serovar L2 (strain ATCC VR-902B / DSM 19102 / 434/Bu).